Here is a 247-residue protein sequence, read N- to C-terminus: 3-deoxy-manno-octulosonate cytidylyltransferase (247 aa).

Belongs to the KdsB family.

Its subcellular location is the cytoplasm. It carries out the reaction 3-deoxy-alpha-D-manno-oct-2-ulosonate + CTP = CMP-3-deoxy-beta-D-manno-octulosonate + diphosphate. It participates in nucleotide-sugar biosynthesis; CMP-3-deoxy-D-manno-octulosonate biosynthesis; CMP-3-deoxy-D-manno-octulosonate from 3-deoxy-D-manno-octulosonate and CTP: step 1/1. Its pathway is bacterial outer membrane biogenesis; lipopolysaccharide biosynthesis. Its function is as follows. Activates KDO (a required 8-carbon sugar) for incorporation into bacterial lipopolysaccharide in Gram-negative bacteria. The chain is 3-deoxy-manno-octulosonate cytidylyltransferase from Chlorobium phaeobacteroides (strain DSM 266 / SMG 266 / 2430).